A 275-amino-acid chain; its full sequence is 2,3,4,5-tetrahydropyridine-2,6-dicarboxylate N-succinyltransferase (275 aa).

Arginine 104 and aspartate 141 together coordinate substrate.

This sequence belongs to the transferase hexapeptide repeat family. In terms of assembly, homotrimer.

The protein resides in the cytoplasm. The catalysed reaction is (S)-2,3,4,5-tetrahydrodipicolinate + succinyl-CoA + H2O = (S)-2-succinylamino-6-oxoheptanedioate + CoA. It participates in amino-acid biosynthesis; L-lysine biosynthesis via DAP pathway; LL-2,6-diaminopimelate from (S)-tetrahydrodipicolinate (succinylase route): step 1/3. This Tolumonas auensis (strain DSM 9187 / NBRC 110442 / TA 4) protein is 2,3,4,5-tetrahydropyridine-2,6-dicarboxylate N-succinyltransferase.